The chain runs to 414 residues: Nuclear pore complex-interacting protein family member B7 (414 aa).

The signal sequence occupies residues 1–18 (MRLRFWLLIWLLLGFISH). An N-linked (GlcNAc...) asparagine glycan is attached at Asn-111. 2 disordered regions span residues 242 to 262 (RMGR…NSLS) and 335 to 402 (SPLP…LRTR). The span at 252 to 262 (QQHSITDNSLS) shows a compositional bias: polar residues. Residues 356 to 384 (EVEKPPKPKRWRVDEVEQSPKPKRQREAE) are compositionally biased toward basic and acidic residues. The segment covering 390–402 (KPKRRRLSKLRTR) has biased composition (basic residues).

Belongs to the NPIP family.

The protein localises to the secreted. This Homo sapiens (Human) protein is Nuclear pore complex-interacting protein family member B7 (NPIPB7).